A 400-amino-acid polypeptide reads, in one-letter code: Enolase (400 aa).

Residue Gln153 participates in (2R)-2-phosphoglycerate binding. Glu195 serves as the catalytic Proton donor. Residues Asp231, Glu274, and Asp301 each contribute to the Mg(2+) site. Residues Lys326, Arg355, Ser356, and Lys377 each contribute to the (2R)-2-phosphoglycerate site. Residue Lys326 is the Proton acceptor of the active site.

This sequence belongs to the enolase family. Requires Mg(2+) as cofactor.

Its subcellular location is the cytoplasm. It localises to the secreted. The protein localises to the cell surface. The catalysed reaction is (2R)-2-phosphoglycerate = phosphoenolpyruvate + H2O. It functions in the pathway carbohydrate degradation; glycolysis; pyruvate from D-glyceraldehyde 3-phosphate: step 4/5. Functionally, catalyzes the reversible conversion of 2-phosphoglycerate (2-PG) into phosphoenolpyruvate (PEP). It is essential for the degradation of carbohydrates via glycolysis. This chain is Enolase, found in Halorubrum lacusprofundi (strain ATCC 49239 / DSM 5036 / JCM 8891 / ACAM 34).